We begin with the raw amino-acid sequence, 408 residues long: Elongation factor Tu, chloroplastic (408 aa).

The region spanning 10 to 214 (KPHVNIGTIG…AVDSYIPTPK (205 aa)) is the tr-type G domain. A G1 region spans residues 19-26 (GHVDHGKT). 19 to 26 (GHVDHGKT) serves as a coordination point for GTP. Thr-26 contributes to the Mg(2+) binding site. Positions 60–64 (GITIN) are G2. The G3 stretch occupies residues 81-84 (DCPG). GTP-binding positions include 81-85 (DCPGH) and 136-139 (NKED). Positions 136-139 (NKED) are G4. A G5 region spans residues 174 to 176 (SAL).

It belongs to the TRAFAC class translation factor GTPase superfamily. Classic translation factor GTPase family. EF-Tu/EF-1A subfamily.

Its subcellular location is the plastid. The protein resides in the chloroplast. The enzyme catalyses GTP + H2O = GDP + phosphate + H(+). In terms of biological role, GTP hydrolase that promotes the GTP-dependent binding of aminoacyl-tRNA to the A-site of ribosomes during protein biosynthesis. The polypeptide is Elongation factor Tu, chloroplastic (tufA) (Chara connivens (Convergent stonewort)).